Reading from the N-terminus, the 201-residue chain is Small ribosomal subunit protein uS4c (201 aa).

The segment at 16–37 (GALPGLTSKRPRSGSDLRNQSR) is disordered. Positions 89–152 (MRLDNTLFRL…RSRTLIQNHI (64 aa)) constitute an S4 RNA-binding domain.

It belongs to the universal ribosomal protein uS4 family. In terms of assembly, part of the 30S ribosomal subunit. Contacts protein S5. The interaction surface between S4 and S5 is involved in control of translational fidelity.

Its subcellular location is the plastid. The protein localises to the chloroplast. In terms of biological role, one of the primary rRNA binding proteins, it binds directly to 16S rRNA where it nucleates assembly of the body of the 30S subunit. Its function is as follows. With S5 and S12 plays an important role in translational accuracy. This Chloranthus spicatus (Chulantree) protein is Small ribosomal subunit protein uS4c (rps4).